We begin with the raw amino-acid sequence, 304 residues long: Murein tetrapeptide carboxypeptidase (304 aa).

Ser106 functions as the Nucleophile in the catalytic mechanism. Catalysis depends on charge relay system residues Glu200 and His270.

It belongs to the peptidase S66 family.

It is found in the cytoplasm. It carries out the reaction N-acetyl-D-glucosaminyl-N-acetylmuramoyl-L-alanyl-meso-2,6-diaminoheptanedioyl-D-alanine + H2O = N-acetyl-D-glucosaminyl-N-acetylmuramoyl-L-alanyl-meso-2,6-diaminoheptanedioate + D-alanine. It functions in the pathway cell wall biogenesis; peptidoglycan recycling. Releases the terminal D-alanine residue from the cytoplasmic tetrapeptide recycling product L-Ala-gamma-D-Glu-meso-Dap-D-Ala. Can also cleave D-Ala from murein derivatives containing the tetrapeptide, i.e. MurNAc-tetrapeptide, UDP-MurNAc-tetrapeptide, GlcNAc-MurNAc-tetrapeptide, and GlcNAc-anhMurNAc-tetrapeptide. Does not act on murein sacculi or cross-linked muropeptides. The tripeptides produced by the LcdA reaction can then be reused as peptidoglycan building blocks; LcdA is thereby involved in murein recycling. The polypeptide is Murein tetrapeptide carboxypeptidase (ldcA) (Escherichia coli O6:H1 (strain CFT073 / ATCC 700928 / UPEC)).